A 565-amino-acid polypeptide reads, in one-letter code: MSDNNVMSDLEIAQRATMRPIGDIAAAAGINADAVELYGRYKAKIDPAKLIDPAGAPKRLPGKVVLVSAMSPTPAGEGKSTTTVGLADSLARAGRNVMIALREPSLGPVLGMKGGATGGGYSQVLPMEEINLHFTGDFHAITSANNALMALVDNHIFQGNELNIDPRRMTFKRVLDMNDRSLREVIIGLGGPAQGVPRQDGFDITVASEIMAVFCLATDIADLRARLGRITFGYTYDREPVTVADLGVQGALTMLLRDAIKPNLVQTIAGTPALVHGGPFANIAHGCNSLIATQTARRLADIVVTEAGFGADLGAEKFMDIKARVAGVAPSAVVLVATVRALKMHGGVAKDRLQEPNVEALAAGSANLRRHIRNVEKFGITPVVAVNKFATDTPEELDWLLEWCAGEGVQAAVADVWGRGGGGDGGDELAAKVLAALEAPHSFRHLYPLELSVEDKIRTIVQEMYGADGVDFSVPALKRLAEIEKNGWAGMPVCMAKTQYSFSDDATRLGAPKGFTVHVRDLIPKTGAGFIVALTGAVMTMPGLPKVPAALRMDVDDTGKPLGLF.

An ATP-binding site is contributed by 73-80 (TPAGEGKS).

This sequence belongs to the formate--tetrahydrofolate ligase family.

It carries out the reaction (6S)-5,6,7,8-tetrahydrofolate + formate + ATP = (6R)-10-formyltetrahydrofolate + ADP + phosphate. Its pathway is one-carbon metabolism; tetrahydrofolate interconversion. The chain is Formate--tetrahydrofolate ligase from Arthrobacter sp. (strain FB24).